The chain runs to 54 residues: Large ribosomal subunit protein bL33 (54 aa).

Belongs to the bacterial ribosomal protein bL33 family.

This Stenotrophomonas maltophilia (strain R551-3) protein is Large ribosomal subunit protein bL33.